The following is a 282-amino-acid chain: 4-diphosphocytidyl-2-C-methyl-D-erythritol kinase (282 aa).

Residue Lys12 is part of the active site. 95-105 (PMGGGIGGGSS) is a binding site for ATP. Asp137 is a catalytic residue.

This sequence belongs to the GHMP kinase family. IspE subfamily.

It catalyses the reaction 4-CDP-2-C-methyl-D-erythritol + ATP = 4-CDP-2-C-methyl-D-erythritol 2-phosphate + ADP + H(+). The protein operates within isoprenoid biosynthesis; isopentenyl diphosphate biosynthesis via DXP pathway; isopentenyl diphosphate from 1-deoxy-D-xylulose 5-phosphate: step 3/6. Catalyzes the phosphorylation of the position 2 hydroxy group of 4-diphosphocytidyl-2C-methyl-D-erythritol. The chain is 4-diphosphocytidyl-2-C-methyl-D-erythritol kinase from Pseudomonas aeruginosa (strain ATCC 15692 / DSM 22644 / CIP 104116 / JCM 14847 / LMG 12228 / 1C / PRS 101 / PAO1).